Here is a 320-residue protein sequence, read N- to C-terminus: L-lactate dehydrogenase (320 aa).

NAD(+)-binding positions include Val19, Asp40, Arg45, and 85 to 86 (GA). Substrate-binding residues include Gln88 and Arg94. NAD(+)-binding positions include Ser107, 124 to 126 (ITN), and Ser149. 126 to 129 (NPVD) serves as a coordination point for substrate. 154-157 (DSAR) contacts substrate. Arg159 and His174 together coordinate beta-D-fructose 1,6-bisphosphate. Catalysis depends on His181, which acts as the Proton acceptor. The residue at position 228 (Tyr228) is a Phosphotyrosine. Thr237 contributes to the substrate binding site.

It belongs to the LDH/MDH superfamily. LDH family. In terms of assembly, homotetramer.

The protein resides in the cytoplasm. The enzyme catalyses (S)-lactate + NAD(+) = pyruvate + NADH + H(+). It participates in fermentation; pyruvate fermentation to lactate; (S)-lactate from pyruvate: step 1/1. With respect to regulation, allosterically activated by fructose 1,6-bisphosphate (FBP). Its function is as follows. Catalyzes the conversion of lactate to pyruvate. The sequence is that of L-lactate dehydrogenase from Bifidobacterium animalis subsp. lactis (strain AD011).